We begin with the raw amino-acid sequence, 207 residues long: Ribonuclease HII (207 aa).

An RNase H type-2 domain is found at 18–207 (GLVAGVDEAG…VAEVLREALP (190 aa)). Positions 24, 25, and 116 each coordinate a divalent metal cation.

Belongs to the RNase HII family. Requires Mn(2+) as cofactor. Mg(2+) is required as a cofactor.

The protein resides in the cytoplasm. It catalyses the reaction Endonucleolytic cleavage to 5'-phosphomonoester.. In terms of biological role, endonuclease that specifically degrades the RNA of RNA-DNA hybrids. In Albidiferax ferrireducens (strain ATCC BAA-621 / DSM 15236 / T118) (Rhodoferax ferrireducens), this protein is Ribonuclease HII.